Consider the following 283-residue polypeptide: Pantothenate synthetase (283 aa).

Position 30 to 37 (30 to 37 (MGALHEGH)) interacts with ATP. Histidine 37 (proton donor) is an active-site residue. Glutamine 61 serves as a coordination point for (R)-pantoate. Glutamine 61 lines the beta-alanine pocket. 149-152 (GEKD) serves as a coordination point for ATP. Residue glutamine 155 coordinates (R)-pantoate. ATP is bound by residues leucine 178 and 186–189 (RSSR).

It belongs to the pantothenate synthetase family. As to quaternary structure, homodimer.

It localises to the cytoplasm. The enzyme catalyses (R)-pantoate + beta-alanine + ATP = (R)-pantothenate + AMP + diphosphate + H(+). It participates in cofactor biosynthesis; (R)-pantothenate biosynthesis; (R)-pantothenate from (R)-pantoate and beta-alanine: step 1/1. Catalyzes the condensation of pantoate with beta-alanine in an ATP-dependent reaction via a pantoyl-adenylate intermediate. The chain is Pantothenate synthetase from Christiangramia forsetii (strain DSM 17595 / CGMCC 1.15422 / KT0803) (Gramella forsetii).